Reading from the N-terminus, the 710-residue chain is PC3-like endoprotease variant B (710 aa).

The N-terminal stretch at 1-29 (MNYRGIYRRRYVFVLLLLVAVVNISYGWT) is a signal peptide. Residues Asn23, Asn62, and Asn190 are each glycosylated (N-linked (GlcNAc...) asparagine). The propeptide occupies 30–152 (VLKNKDYKRR…QQKILERVKR (123 aa)). Positions 164–486 (MWYLLNTGQA…FGRLDANAMV (323 aa)) constitute a Peptidase S8 domain. Active-site charge relay system residues include Asp202 and His242. Intrachain disulfides connect Cys259/Cys411 and Cys351/Cys381. The active-site Charge relay system is Ser419. Residues 495–638 (LPAQRKCTAA…EERVIDTQTK (144 aa)) enclose the P/Homo B domain. A disulfide bridge connects residues Cys501 and Cys527. The disordered stretch occupies residues 668–710 (TIEGSTQDHVKPKEGAKEPWGNYRNTNNINNNSSTAFKRKKKQ). Positions 673–684 (TQDHVKPKEGAK) are enriched in basic and acidic residues. Residues 689–699 (NYRNTNNINNN) are compositionally biased toward low complexity. Asn698 and Asn699 each carry an N-linked (GlcNAc...) asparagine glycan.

Belongs to the peptidase S8 family. Furin subfamily. In terms of tissue distribution, predominantly in the body column.

Its function is as follows. Probably involved in the processing of hormone and other protein precursors at sites comprised of pairs of basic amino acid residues. In Hydra vulgaris (Hydra), this protein is PC3-like endoprotease variant B.